The sequence spans 55 residues: ATP synthase F(0) complex subunit 8 (55 aa).

A helical transmembrane segment spans residues 4–24 (LNPAPWFAILVFSWLVFLTVI). Residues 36–55 (EPTSQSTEKTKPEPWNWPWH) are disordered.

It belongs to the ATPase protein 8 family. In terms of assembly, component of the ATP synthase complex composed at least of ATP5F1A/subunit alpha, ATP5F1B/subunit beta, ATP5MC1/subunit c (homooctomer), MT-ATP6/subunit a, MT-ATP8/subunit 8, ATP5ME/subunit e, ATP5MF/subunit f, ATP5MG/subunit g, ATP5MK/subunit k, ATP5MJ/subunit j, ATP5F1C/subunit gamma, ATP5F1D/subunit delta, ATP5F1E/subunit epsilon, ATP5PF/subunit F6, ATP5PB/subunit b, ATP5PD/subunit d, ATP5PO/subunit OSCP. ATP synthase complex consists of a soluble F(1) head domain (subunits alpha(3) and beta(3)) - the catalytic core - and a membrane F(0) domain - the membrane proton channel (subunits c, a, 8, e, f, g, k and j). These two domains are linked by a central stalk (subunits gamma, delta, and epsilon) rotating inside the F1 region and a stationary peripheral stalk (subunits F6, b, d, and OSCP).

It is found in the mitochondrion membrane. Functionally, subunit 8, of the mitochondrial membrane ATP synthase complex (F(1)F(0) ATP synthase or Complex V) that produces ATP from ADP in the presence of a proton gradient across the membrane which is generated by electron transport complexes of the respiratory chain. ATP synthase complex consist of a soluble F(1) head domain - the catalytic core - and a membrane F(1) domain - the membrane proton channel. These two domains are linked by a central stalk rotating inside the F(1) region and a stationary peripheral stalk. During catalysis, ATP synthesis in the catalytic domain of F(1) is coupled via a rotary mechanism of the central stalk subunits to proton translocation. In vivo, can only synthesize ATP although its ATP hydrolase activity can be activated artificially in vitro. Part of the complex F(0) domain. The polypeptide is ATP synthase F(0) complex subunit 8 (Salvelinus alpinus (Arctic char)).